The chain runs to 86 residues: Large ribosomal subunit protein bL27 (86 aa).

Residues 1-10 (MAQKKGGGST) show a composition bias toward gly residues. Residues 1 to 20 (MAQKKGGGSTRNGRDSESKR) are disordered.

It belongs to the bacterial ribosomal protein bL27 family.

In Bordetella avium (strain 197N), this protein is Large ribosomal subunit protein bL27.